Consider the following 186-residue polypeptide: Elongation factor P (186 aa).

The protein belongs to the elongation factor P family.

It localises to the cytoplasm. It participates in protein biosynthesis; polypeptide chain elongation. In terms of biological role, involved in peptide bond synthesis. Stimulates efficient translation and peptide-bond synthesis on native or reconstituted 70S ribosomes in vitro. Probably functions indirectly by altering the affinity of the ribosome for aminoacyl-tRNA, thus increasing their reactivity as acceptors for peptidyl transferase. In Thiobacillus denitrificans (strain ATCC 25259 / T1), this protein is Elongation factor P.